Reading from the N-terminus, the 181-residue chain is UPF0302 protein LMHCC_0635 (181 aa).

It belongs to the UPF0302 family.

This Listeria monocytogenes serotype 4a (strain HCC23) protein is UPF0302 protein LMHCC_0635.